An 826-amino-acid chain; its full sequence is Beta-galactosidase 7 (826 aa).

Residues 1 to 25 form the signal peptide; the sequence is MKMKHFTRLLSLFFILITSLSLAKS. N-linked (GlcNAc...) asparagine glycosylation occurs at asparagine 154. Glutamate 184 serves as the catalytic Proton donor. Glutamate 253 (nucleophile) is an active-site residue. N-linked (GlcNAc...) asparagine glycosylation is found at asparagine 254, asparagine 351, asparagine 380, asparagine 491, asparagine 665, asparagine 706, asparagine 797, and asparagine 801. In terms of domain architecture, SUEL-type lectin spans 740-826; the sequence is AHEHNKVELS…PKKLAVELEC (87 aa).

Belongs to the glycosyl hydrolase 35 family. Expressed in flowers.

Its subcellular location is the secreted. It is found in the extracellular space. The protein resides in the apoplast. The catalysed reaction is Hydrolysis of terminal non-reducing beta-D-galactose residues in beta-D-galactosides.. This is Beta-galactosidase 7 (BGAL7) from Arabidopsis thaliana (Mouse-ear cress).